A 60-amino-acid chain; its full sequence is Sec-independent protein translocase protein TatA (60 aa).

The chain crosses the membrane as a helical span at residues 1–21 (MLSNIGVPGLILILVIALVIF).

It belongs to the TatA/E family. As to quaternary structure, forms a complex with TatC.

Its subcellular location is the cell membrane. In terms of biological role, part of the twin-arginine translocation (Tat) system that transports large folded proteins containing a characteristic twin-arginine motif in their signal peptide across membranes. TatA could form the protein-conducting channel of the Tat system. In Anoxybacillus flavithermus (strain DSM 21510 / WK1), this protein is Sec-independent protein translocase protein TatA.